We begin with the raw amino-acid sequence, 92 residues long: UPF0237 protein MM_0082 (92 aa).

The ACT domain occupies 7 to 81 (IITVIGSDRV…KSLGVEVKVQ (75 aa)).

Belongs to the UPF0237 family.

The chain is UPF0237 protein MM_0082 from Methanosarcina mazei (strain ATCC BAA-159 / DSM 3647 / Goe1 / Go1 / JCM 11833 / OCM 88) (Methanosarcina frisia).